A 444-amino-acid chain; its full sequence is Endoglucanase N (444 aa).

A signal peptide spans 1–31; that stretch reads MWMRRNQIVRKLTLGVVTTVLGMSLSFSALS. Substrate is bound by residues His-64, 68 to 69, Tyr-95, and His-130; that span reads WF. Glu-168 functions as the Proton donor in the catalytic mechanism. Tyr-230 is a binding site for substrate. The active-site Nucleophile is the Glu-256. Residues 262–263, Trp-290, and 295–297 each bind substrate; these read AS and KSE. The disordered stretch occupies residues 332–358; the sequence is ANLGGGDTPTTPTTPTEPTNPGNGTTG. Positions 339-358 are enriched in low complexity; sequence TPTTPTTPTEPTNPGNGTTG. Residues 356–444 form the CBM3 domain; that stretch reads TTGDVVLQYR…DKANRYVLVT (89 aa).

The protein belongs to the glycosyl hydrolase 5 (cellulase A) family.

The protein resides in the secreted. The catalysed reaction is Endohydrolysis of (1-&gt;4)-beta-D-glucosidic linkages in cellulose, lichenin and cereal beta-D-glucans.. This Pectobacterium atrosepticum (Erwinia carotovora subsp. atroseptica) protein is Endoglucanase N (celN).